Here is a 503-residue protein sequence, read N- to C-terminus: Probable cytosol aminopeptidase (503 aa).

Mn(2+) is bound by residues K270 and D275. Residue K282 is part of the active site. 3 residues coordinate Mn(2+): D293, D352, and E354. R356 is a catalytic residue.

The protein belongs to the peptidase M17 family. Requires Mn(2+) as cofactor.

The protein resides in the cytoplasm. It carries out the reaction Release of an N-terminal amino acid, Xaa-|-Yaa-, in which Xaa is preferably Leu, but may be other amino acids including Pro although not Arg or Lys, and Yaa may be Pro. Amino acid amides and methyl esters are also readily hydrolyzed, but rates on arylamides are exceedingly low.. The catalysed reaction is Release of an N-terminal amino acid, preferentially leucine, but not glutamic or aspartic acids.. Presumably involved in the processing and regular turnover of intracellular proteins. Catalyzes the removal of unsubstituted N-terminal amino acids from various peptides. The sequence is that of Probable cytosol aminopeptidase from Escherichia fergusonii (strain ATCC 35469 / DSM 13698 / CCUG 18766 / IAM 14443 / JCM 21226 / LMG 7866 / NBRC 102419 / NCTC 12128 / CDC 0568-73).